A 237-amino-acid polypeptide reads, in one-letter code: Proteasome subunit alpha type-5-B (237 aa).

Position 1 is an N-acetylmethionine (methionine 1). Residues lysine 43, lysine 66, and lysine 185 each participate in a glycyl lysine isopeptide (Lys-Gly) (interchain with G-Cter in ubiquitin) cross-link.

This sequence belongs to the peptidase T1A family. As to quaternary structure, component of the 20S core complex of the 26S proteasome. The 26S proteasome is composed of a core protease (CP), known as the 20S proteasome, capped at one or both ends by the 19S regulatory particle (RP/PA700). The 20S proteasome core is composed of 28 subunits that are arranged in four stacked rings, resulting in a barrel-shaped structure. The two end rings are each formed by seven alpha subunits, and the two central rings are each formed by seven beta subunits. The catalytic chamber with the active sites is on the inside of the barrel.

It is found in the cytoplasm. The protein resides in the nucleus. The proteasome is a multicatalytic proteinase complex which is characterized by its ability to cleave peptides with Arg, Phe, Tyr, Leu, and Glu adjacent to the leaving group at neutral or slightly basic pH. The proteasome has an ATP-dependent proteolytic activity. The protein is Proteasome subunit alpha type-5-B (PAE2) of Arabidopsis thaliana (Mouse-ear cress).